Consider the following 265-residue polypeptide: Tryptophan synthase alpha chain (265 aa).

Catalysis depends on proton acceptor residues Glu49 and Asp60.

This sequence belongs to the TrpA family. As to quaternary structure, tetramer of two alpha and two beta chains.

It carries out the reaction (1S,2R)-1-C-(indol-3-yl)glycerol 3-phosphate + L-serine = D-glyceraldehyde 3-phosphate + L-tryptophan + H2O. It functions in the pathway amino-acid biosynthesis; L-tryptophan biosynthesis; L-tryptophan from chorismate: step 5/5. Its function is as follows. The alpha subunit is responsible for the aldol cleavage of indoleglycerol phosphate to indole and glyceraldehyde 3-phosphate. This is Tryptophan synthase alpha chain from Ralstonia nicotianae (strain ATCC BAA-1114 / GMI1000) (Ralstonia solanacearum).